Consider the following 148-residue polypeptide: Large ribosomal subunit protein bL9 (148 aa).

The protein belongs to the bacterial ribosomal protein bL9 family.

In terms of biological role, binds to the 23S rRNA. The polypeptide is Large ribosomal subunit protein bL9 (Pseudomonas putida (strain W619)).